The primary structure comprises 608 residues: Chaperone protein HtpG (608 aa).

The a; substrate-binding stretch occupies residues 1-332 (MQFQTEVNQL…VEDLPLNVSR (332 aa)). The b stretch occupies residues 333–536 (EILQENQILK…KNKLDFAMQQ (204 aa)). Residues 537–608 (LLKQMGQEQN…LTKIINKAFS (72 aa)) are c.

This sequence belongs to the heat shock protein 90 family. In terms of assembly, homodimer.

The protein resides in the cytoplasm. In terms of biological role, molecular chaperone. Has ATPase activity. This is Chaperone protein HtpG from Campylobacter jejuni subsp. doylei (strain ATCC BAA-1458 / RM4099 / 269.97).